The chain runs to 104 residues: Thioredoxin (104 aa).

The region spanning 2–104 (KQVSDASFEE…KLFEWVEASV (103 aa)) is the Thioredoxin domain. Residues cysteine 29 and cysteine 32 are joined by a disulfide bond.

This sequence belongs to the thioredoxin family.

Its function is as follows. Participates in various redox reactions through the reversible oxidation of its active center dithiol to a disulfide and catalyzes dithiol-disulfide exchange reactions. In Rhodospirillum rubrum, this protein is Thioredoxin (trxA).